The chain runs to 204 residues: ATP-dependent Clp protease proteolytic subunit 1 (204 aa).

Ser-97 functions as the Nucleophile in the catalytic mechanism. Residue His-122 is part of the active site.

The protein belongs to the peptidase S14 family. As to quaternary structure, fourteen ClpP subunits assemble into 2 heptameric rings which stack back to back to give a disk-like structure with a central cavity, resembling the structure of eukaryotic proteasomes.

The protein localises to the cytoplasm. The enzyme catalyses Hydrolysis of proteins to small peptides in the presence of ATP and magnesium. alpha-casein is the usual test substrate. In the absence of ATP, only oligopeptides shorter than five residues are hydrolyzed (such as succinyl-Leu-Tyr-|-NHMec, and Leu-Tyr-Leu-|-Tyr-Trp, in which cleavage of the -Tyr-|-Leu- and -Tyr-|-Trp bonds also occurs).. Cleaves peptides in various proteins in a process that requires ATP hydrolysis. Has a chymotrypsin-like activity. Plays a major role in the degradation of misfolded proteins. In Trichormus variabilis (strain ATCC 29413 / PCC 7937) (Anabaena variabilis), this protein is ATP-dependent Clp protease proteolytic subunit 1.